Here is a 579-residue protein sequence, read N- to C-terminus: Nuclear receptor coactivator 5 (579 aa).

Residue methionine 1 is modified to N-acetylmethionine. The interval 1 to 77 is disordered; it reads MNTAPSRPSP…DIRDHRDSRS (77 aa). The segment at 1 to 158 is transcription repression; the sequence is MNTAPSRPSP…RDSFDGRGPP (158 aa). Threonine 3 is subject to Phosphothreonine. Residues serine 9, serine 21, serine 29, serine 34, serine 96, serine 116, serine 126, serine 143, and serine 151 each carry the phosphoserine modification. Basic and acidic residues predominate over residues 11 to 77; the sequence is TRRDPYSFGD…DIRDHRDSRS (67 aa). Residues 148-172 are disordered; that stretch reads YRDSFDGRGPPGPESQSRAKERLKR. Position 274 is a phosphothreonine (threonine 274). The LXXLL motif motif lies at 345-349; it reads LINLL. Phosphoserine is present on residues serine 378 and serine 381. Disordered stretches follow at residues 378–428 and 446–529; these read SADS…PTSQ and ANSS…RPVS. Low complexity-rich tracts occupy residues 395–420 and 446–460; these read SGSS…ATPT and ANSS…TGSS. Residues 458 to 579 form a transcription activation region; sequence GSSQNQNFST…APMGSYQRHY (122 aa). Over residues 461-485 the composition is skewed to polar residues; the sequence is QNQNFSTAANSQPQQRPQASGNQPP.

Binds HTATIP2/TIP30. Interacts with YLPM1. Forms a complex with ILF2, ILF3, YLPM1, KHDRBS1, RBMX and PPP1CA.

The protein localises to the nucleus. Nuclear receptor coregulator that can have both coactivator and corepressor functions. Interacts with nuclear receptors for steroids (ESR1 and ESR2) independently of the steroid binding domain (AF-2) of the ESR receptors, and with the orphan nuclear receptor NR1D2. Involved in the coactivation of nuclear steroid receptors (ER) as well as the corepression of MYC in response to 17-beta-estradiol (E2). This chain is Nuclear receptor coactivator 5 (Ncoa5), found in Mus musculus (Mouse).